Consider the following 1067-residue polypeptide: SURP and G-patch domain-containing protein 2 (1067 aa).

Serine 93 bears the Phosphoserine mark. Residues 177–189 show a composition bias toward basic and acidic residues; it reads KESRDYDLDHPGE. The interval 177–199 is disordered; it reads KESRDYDLDHPGEVDSVSRSSGQ. The residue at position 206 (serine 206) is a Phosphoserine. Lysine 219 participates in a covalent cross-link: Glycyl lysine isopeptide (Lys-Gly) (interchain with G-Cter in SUMO2). Threonine 265 is subject to Phosphothreonine. A phosphoserine mark is found at serine 267 and serine 586. One copy of the SURP motif 1 repeat lies at 573–616; sequence IDQLVMRVIQGRLSPRERTLLLQDPAYWFLSDESSLEYKYYKLK. The interval 668–767 is disordered; that stretch reads SQGPRGLKAK…CPSANMDAKT (100 aa). The segment covering 680 to 691 has biased composition (polar residues); sequence TTAQQTSLSSGT. Position 740 is a phosphoserine (serine 740). A Phosphothreonine modification is found at threonine 744. Residues 770 to 813 form an SURP motif 2 repeat; the sequence is TAEKLARFVAQVGPEIEQFSIENSTDNPDLWFLHDQSSSAFKFY. Over residues 825 to 840 the composition is skewed to polar residues; sequence SFQSTGEAGDSVQSPT. 2 disordered regions span residues 825–944 and 967–991; these read SFQS…KSLK and RIAY…EFSQ. Serine 838 carries the phosphoserine modification. Positions 843–856 are enriched in basic and acidic residues; that stretch reads KEGKGEPQEGHPEQ. A compositionally biased stretch (acidic residues) spans 866–883; the sequence is LPEEEEEDEEESEDEGGE. Polar residues predominate over residues 919–931; that stretch reads ASTPGLSQASSGS. Residues 975–984 show a composition bias toward basic residues; that stretch reads GRPIAKKKKP. The short motif at 980 to 985 is the Nuclear localization signal element; it reads KKKKPK. A G-patch domain is found at 996 to 1042; the sequence is DKNVGFQMLQKMGWKEGHGLGSLGKGIREPVSVGALSEGEGLGADGP.

It is found in the nucleus. Functionally, may play a role in mRNA splicing. The polypeptide is SURP and G-patch domain-containing protein 2 (Sugp2) (Mus musculus (Mouse)).